We begin with the raw amino-acid sequence, 349 residues long: DNA-directed RNA polymerase subunit alpha (349 aa).

The interval 1-226 (MLIAQRPTLV…GLFGLAQELN (226 aa)) is alpha N-terminal domain (alpha-NTD). Residues 241–349 (AALAADLALP…GAEFVETEQY (109 aa)) are alpha C-terminal domain (alpha-CTD). The segment at 308–349 (LKDSPPGFDPRQAVDTYGTDSYNPAFSDPSDDGAEFVETEQY) is disordered. Positions 336–349 (PSDDGAEFVETEQY) are enriched in acidic residues.

Belongs to the RNA polymerase alpha chain family. In terms of assembly, homodimer. The RNAP catalytic core consists of 2 alpha, 1 beta, 1 beta' and 1 omega subunit. When a sigma factor is associated with the core the holoenzyme is formed, which can initiate transcription.

It catalyses the reaction RNA(n) + a ribonucleoside 5'-triphosphate = RNA(n+1) + diphosphate. Functionally, DNA-dependent RNA polymerase catalyzes the transcription of DNA into RNA using the four ribonucleoside triphosphates as substrates. This Frankia alni (strain DSM 45986 / CECT 9034 / ACN14a) protein is DNA-directed RNA polymerase subunit alpha.